The primary structure comprises 119 residues: Nucleoid-associated protein Cphy_0047 (119 aa).

Residues A23 to T45 are disordered. A compositionally biased stretch (basic and acidic residues) spans K28–W42.

Belongs to the YbaB/EbfC family. As to quaternary structure, homodimer.

Its subcellular location is the cytoplasm. It is found in the nucleoid. Its function is as follows. Binds to DNA and alters its conformation. May be involved in regulation of gene expression, nucleoid organization and DNA protection. This chain is Nucleoid-associated protein Cphy_0047, found in Lachnoclostridium phytofermentans (strain ATCC 700394 / DSM 18823 / ISDg) (Clostridium phytofermentans).